The following is a 472-amino-acid chain: Radical SAM cyclopropyl synthase TigE (472 aa).

The Radical SAM core domain maps to 106–331 (GEQIKAIQLV…VIDLYEYGLD (226 aa)). C120, C124, C127, Y339, C360, C378, C414, C417, C423, C427, and C446 together coordinate [4Fe-4S] cluster.

The protein belongs to the radical SAM superfamily. [4Fe-4S] cluster serves as cofactor.

It catalyses the reaction L-isoleucyl-[protein] + AH2 + 2 S-adenosyl-L-methionine = methylcyclopropylglycine-[protein] + 2 5'-deoxyadenosine + 2 L-methionine + A + 2 H(+). In terms of biological role, radical S-adenosylmethionine (SAM) enzyme that catalyzes the formation of methylcyclopropylglycine (mCPG) residues from isoleucine residues residing in the repeating TIGSVS motif of the precursor peptide TigB. Is thus involved in the maturation of a ribosomally synthesized and post-translationally modified peptide (RiPP). In Paramaledivibacter caminithermalis (strain DSM 15212 / CIP 107654 / DViRD3) (Clostridium caminithermale), this protein is Radical SAM cyclopropyl synthase TigE.